The following is a 198-amino-acid chain: Ribonuclease HII (198 aa).

Residues 9–198 (ITVAGADEAG…LLPDQLKIDF (190 aa)) enclose the RNase H type-2 domain. A divalent metal cation is bound by residues aspartate 15, glutamate 16, and aspartate 107.

It belongs to the RNase HII family. The cofactor is Mn(2+). Requires Mg(2+) as cofactor.

The protein localises to the cytoplasm. It carries out the reaction Endonucleolytic cleavage to 5'-phosphomonoester.. In terms of biological role, endonuclease that specifically degrades the RNA of RNA-DNA hybrids. This is Ribonuclease HII from Christiangramia forsetii (strain DSM 17595 / CGMCC 1.15422 / KT0803) (Gramella forsetii).